A 115-amino-acid polypeptide reads, in one-letter code: Small ribosomal subunit protein uS17 (115 aa).

Belongs to the universal ribosomal protein uS17 family. As to quaternary structure, part of the 30S ribosomal subunit.

Functionally, one of the primary rRNA binding proteins, it binds specifically to the 5'-end of 16S ribosomal RNA. The polypeptide is Small ribosomal subunit protein uS17 (Granulibacter bethesdensis (strain ATCC BAA-1260 / CGDNIH1)).